We begin with the raw amino-acid sequence, 230 residues long: C-methyltransferase CouO (230 aa).

Belongs to the methyltransferase superfamily.

It participates in antibiotic biosynthesis. Mediates C-methylation at the 8-position of the aminocoumarin moieties in coumermycin A1 in the biosynthetic pathway of coumermycin antibiotic. Active on both mono- and bis-amides for mono- and di-C-methylation adjacent to the phenolic hydroxyl before it is glycosylated by CouM. The chain is C-methyltransferase CouO (couO) from Streptomyces rishiriensis.